An 82-amino-acid polypeptide reads, in one-letter code: Small ribosomal subunit protein bS18 (82 aa).

It belongs to the bacterial ribosomal protein bS18 family. In terms of assembly, part of the 30S ribosomal subunit. Forms a tight heterodimer with protein bS6.

In terms of biological role, binds as a heterodimer with protein bS6 to the central domain of the 16S rRNA, where it helps stabilize the platform of the 30S subunit. This is Small ribosomal subunit protein bS18 from Sinorhizobium fredii (strain NBRC 101917 / NGR234).